A 309-amino-acid chain; its full sequence is Thiamine-monophosphate kinase (309 aa).

2 residues coordinate Mg(2+): Asp-41 and Asp-55. His-62 contributes to the substrate binding site. Asp-83, Asp-128, and Asp-215 together coordinate Mg(2+). 127 to 128 lines the ATP pocket; the sequence is GD. Ser-217 is an ATP binding site. Asp-218 contacts Mg(2+). Position 268 (Glu-268) interacts with substrate.

It belongs to the thiamine-monophosphate kinase family.

It carries out the reaction thiamine phosphate + ATP = thiamine diphosphate + ADP. It functions in the pathway cofactor biosynthesis; thiamine diphosphate biosynthesis; thiamine diphosphate from thiamine phosphate: step 1/1. In terms of biological role, catalyzes the ATP-dependent phosphorylation of thiamine-monophosphate (TMP) to form thiamine-pyrophosphate (TPP), the active form of vitamin B1. This Methanopyrus kandleri (strain AV19 / DSM 6324 / JCM 9639 / NBRC 100938) protein is Thiamine-monophosphate kinase.